The chain runs to 448 residues: Exodeoxyribonuclease 7 large subunit (448 aa).

The protein belongs to the XseA family. In terms of assembly, heterooligomer composed of large and small subunits.

The protein resides in the cytoplasm. It carries out the reaction Exonucleolytic cleavage in either 5'- to 3'- or 3'- to 5'-direction to yield nucleoside 5'-phosphates.. Functionally, bidirectionally degrades single-stranded DNA into large acid-insoluble oligonucleotides, which are then degraded further into small acid-soluble oligonucleotides. In Alcanivorax borkumensis (strain ATCC 700651 / DSM 11573 / NCIMB 13689 / SK2), this protein is Exodeoxyribonuclease 7 large subunit.